A 921-amino-acid chain; its full sequence is TRPM8 channel-associated factor 1 (921 aa).

Positions 542-841 (YCWMSTGLYI…TYLQLQEAFG (300 aa)) constitute a Peptidase M60 domain.

Belongs to the TCAF family. In terms of assembly, interacts with TRPM8 (via N-terminus and C-terminus domains); the interaction inhibits TRPM8 channel activity. Interacts with TRPV6.

The protein localises to the cell membrane. Its function is as follows. Positively regulates the plasma membrane cation channel TRPM8 activity. Involved in the recruitment of TRPM8 to the cell surface. Promotes prostate cancer cell migration inhibition in a TRPM8-dependent manner. The polypeptide is TRPM8 channel-associated factor 1 (Pongo abelii (Sumatran orangutan)).